A 165-amino-acid chain; its full sequence is Pro-MCH (165 aa).

The signal sequence occupies residues 1–21 (MAKMSLSSYLLILTFSLFSQG). Residues 68 to 88 (NDDSSFMNDEENKNSKNTGSK) form a disordered region. I143 is modified (isoleucine amide). C153 and C162 are joined by a disulfide.

The protein belongs to the melanin-concentrating hormone family. Post-translationally, pro-MCH is processed differentially in the brain and in peripheral organs producing two neuropeptides; NEI and MCH. A third peptide, NGE, may also be produced. Preferential processing in neurons by prohormone convertase 2 (PC2) generates NEI. MCH is generated in neurons of the lateral hypothalmic area by several prohormone convertases including PC1/3, PC2 and PC5/6.

The protein localises to the secreted. Its function is as follows. MCH may act as a neurotransmitter or neuromodulator in a broad array of neuronal functions directed toward the regulation of goal-directed behavior, such as food intake, and general arousal. This chain is Pro-MCH (PMCH), found in Canis lupus familiaris (Dog).